The chain runs to 379 residues: Putative acetyl-CoA C-acetyltransferase VraB (379 aa).

Cys86 serves as the catalytic Acyl-thioester intermediate. The active-site Proton acceptor is the His338.

It belongs to the thiolase-like superfamily. Thiolase family.

This is Putative acetyl-CoA C-acetyltransferase VraB (vraB) from Staphylococcus aureus (strain MRSA252).